We begin with the raw amino-acid sequence, 1614 residues long: Protein scribble homolog (1614 aa).

The segment at 1-809 (MLKCIPLWRC…MRLWRERMVE (809 aa)) is sufficient for targeting to adherens junction and to inhibit cell proliferation. LRR repeat units follow at residues 11–34 (NRHV…IYRY), 35–58 (SRSL…FFRL), 59–81 (LNLR…VANF), 83–105 (QLVE…KFCK), 107–127 (LEIA…FTQL), 128–150 (RSLA…VGNL), 151–173 (ANLV…LSFL), 174–196 (VKLE…LGAL), 197–219 (PNLR…LGNL), 221–242 (RLVC…LGGL), 243–265 (LLLT…IGQL), 267–288 (QLSI…IGDC), 289–311 (ENLS…LGKL), 312–334 (TKLT…IGGC), 336–357 (ALSV…LAHT), 359–380 (ELHV…LTHL), and 382–405 (LKAL…DDAQ). Position 37 is a phosphoserine (Ser-37). Thr-378 carries the post-translational modification Phosphothreonine. Disordered stretches follow at residues 417–441 (PQQP…SDAP), 462–608 (GAAA…RLIR), and 636–692 (AQPD…VVSA). The span at 428-437 (GLQSSPSESW) shows a compositional bias: polar residues. Residue Thr-475 is modified to Phosphothreonine. A compositionally biased stretch (basic and acidic residues) spans 479 to 494 (SELKVMKRGVEERRGE). The segment covering 516-533 (TESGLSEDSQPSTGTASQ) has biased composition (polar residues). Low complexity predominate over residues 548–557 (QQEAAPNAQE). Acidic residues predominate over residues 662-686 (EEEDEEDEEEDEEEEEVAVAEEDKE). Residues 664-691 (EDEEDEEEDEEEEEVAVAEEDKEEAVVS) adopt a coiled-coil conformation. Residues Ser-699 and Ser-755 each carry the phosphoserine modification. Residues 708-1219 (IEPARIEEEE…SLESVSSIDR (512 aa)) are interaction with ARHGEF7. In terms of domain architecture, PDZ 1 spans 719–806 (TLTIVRQTGG…TVQMRLWRER (88 aa)). The tract at residues 719-1184 (TLTIVRQTGG…TVLVCDGFDT (466 aa)) is required for interaction with VIM. The residue at position 817 (Thr-817) is a Phosphothreonine. A phosphoserine mark is found at Ser-826, Ser-866, and Ser-930. The PDZ 2 domain occupies 853-941 (VACLVRSEKG…TIALLLEREA (89 aa)). A disordered region spans residues 940 to 971 (EAGGPLPPSPLPHSPPPPVTAPSTVVTASPGE). Pro residues predominate over residues 944–959 (PLPPSPLPHSPPPPVT). The segment covering 960–969 (APSTVVTASP) has biased composition (low complexity). PDZ domains lie at 994–1083 (EICL…RRDP) and 1090–1178 (ELCI…TVLV). Residues Ser-1130, Ser-1210, Ser-1213, Ser-1216, Ser-1222, Ser-1260, Ser-1268, and Ser-1271 each carry the phosphoserine modification. Residues 1214-1448 (VSSIDRELSP…LPDRALSPAE (235 aa)) are disordered. Basic and acidic residues predominate over residues 1217–1232 (IDRELSPEGCGKEKEP). Thr-1304 carries the post-translational modification Phosphothreonine. At Ser-1310 the chain carries Phosphoserine. A compositionally biased stretch (basic and acidic residues) spans 1315–1327 (SFRERQKYFELEV). A Phosphoserine modification is found at Ser-1340. A coiled-coil region spans residues 1341 to 1368 (LVGADDLRKMQEEEARKLQQKRAQLMRE). A compositionally biased stretch (basic and acidic residues) spans 1345 to 1357 (DDLRKMQEEEARK). Acidic residues predominate over residues 1378–1390 (LDGEAPDDEEPEE). Low complexity predominate over residues 1396–1408 (GPAAGLSPSSPQP). Phosphoserine occurs at positions 1402 and 1405. Residues 1418 to 1429 (AKAERRHQERLR) show a composition bias toward basic and acidic residues. Phosphoserine occurs at positions 1432, 1445, and 1467. The tract at residues 1476–1524 (QMVLSKSQEGRSRRGPLERLAEAPSPAPTPSPTPVEDLGLQTSTSPGRL) is disordered. Basic and acidic residues predominate over residues 1483-1496 (QEGRSRRGPLERLA). Ser-1500 carries the post-translational modification Phosphoserine. A Phosphothreonine modification is found at Thr-1504. Phosphoserine is present on residues Ser-1506, Ser-1520, and Ser-1550. Positions 1581–1614 (GRPSPGTVGPEEVTLCSSRRPVRPGRRGLGPVPS) are disordered.

This sequence belongs to the LAP (LRR and PDZ) protein family. As to quaternary structure, interacts with UBE3A. Interacts with PAK1 and PAK2. Interacts (via PDZ domains) with VANGL2. Interacts (via PDZ domains) with LPP and TRIP6; the interaction is direct. Interacts (via PDZ domains) with TJP2. Interacts (via PDZ domains) with APC; may mediate APC targeting to adherens junctions of epithelial cells. Interacts (via PDZ domains) with TSHR; regulates TSHR trafficking and function. Interacts with ARHGEF7 and GIT1; interacts directly with ARHGEF7. Interacts with CTNNB1. Interacts with MAPK12. Interacts (via PDZ domains 1 and 3) with MCC. Interacts with DLG5. Interacts with STK4/MST1 and LATS1 in the presence of DLG5. Interacts (via PDZ domain 3) with CRTAM (via PDZ-binding motif); the interaction promotes CRTAM and SCRIB polarization in a subset of CD4+ T-cells. Interacts with YES1, when YES1 is in a closed conformation; the interaction facilitates YES1 autophosphorylation. Interacts (via PDZ domains) with VIM; the interaction protects SCRIB from proteasomal degradation and facilitates SCRIB localization to intermediate filaments, the interaction is reduced by cell contact inhibition. Ubiquitinated; targeted for UBE3A-dependent multiubiquitination and degraded. Post-translationally, palmitoylated. Could be depalmitoylated by LYPLA1 and/or LYPLA2. Palmitoylation of SCRIB by ZDHHC7 is required for its localization to cell-cell junctions, function in the establishement of epithelial cell polarity and the regulation of downstream signaling pathways important for epithelial cell differentiation.

The protein resides in the cell membrane. Its subcellular location is the cell junction. It localises to the adherens junction. The protein localises to the cell projection. It is found in the lamellipodium. The protein resides in the cytoplasm. Its subcellular location is the postsynapse. It localises to the presynapse. Scaffold protein involved in different aspects of polarized cell differentiation regulating epithelial and neuronal morphogenesis and T-cell polarization. Via its interaction with CRTAM, required for the late phase polarization of a subset of CD4+ T-cells, which in turn regulates TCR-mediated proliferation and IFNG and IL22 production. Plays a role in cell directional movement, cell orientation, cell sheet organization and Golgi complex polarization at the cell migration front. Promotes epithelial cell layer barrier function via maintaining cell-cell adhesion. Most probably functions in the establishment of apico-basal cell polarity. May function in cell proliferation regulating progression from G1 to S phase and as a positive regulator of apoptosis for instance during acinar morphogenesis of the mammary epithelium. May regulate cell invasion via MAPK-mediated cell migration and adhesion. May play a role in exocytosis and in the targeting of synaptic vesicles to synapses. Functions as an activator of Rac GTPase activity. In Canis lupus familiaris (Dog), this protein is Protein scribble homolog.